The sequence spans 497 residues: Cysteine--tRNA ligase (497 aa).

Residue C34 coordinates Zn(2+). The 'HIGH' region motif lies at 36–46 (PTVYDFAHIGN). Zn(2+) contacts are provided by C243, H268, and E272. The short motif at 301–305 (KMAKS) is the 'KMSKS' region element. K304 contacts ATP. The disordered stretch occupies residues 478–497 (LMDYKDPETGERRTKWEVKR). Residues 480–497 (DYKDPETGERRTKWEVKR) are compositionally biased toward basic and acidic residues.

The protein belongs to the class-I aminoacyl-tRNA synthetase family. Monomer. Requires Zn(2+) as cofactor.

It is found in the cytoplasm. The enzyme catalyses tRNA(Cys) + L-cysteine + ATP = L-cysteinyl-tRNA(Cys) + AMP + diphosphate. The sequence is that of Cysteine--tRNA ligase from Chelativorans sp. (strain BNC1).